A 780-amino-acid chain; its full sequence is 5-methyltetrahydropteroyltriglutamate--homocysteine methyltransferase (780 aa).

5-methyltetrahydropteroyltri-L-glutamate-binding positions include 15 to 18 (RELK) and K114. L-homocysteine is bound by residues 457 to 459 (IGS) and E510. L-methionine contacts are provided by residues 457–459 (IGS) and E510. 5-methyltetrahydropteroyltri-L-glutamate-binding positions include 541-542 (RC) and W587. D625 serves as a coordination point for L-homocysteine. D625 contributes to the L-methionine binding site. Residue E631 coordinates 5-methyltetrahydropteroyltri-L-glutamate. Zn(2+) contacts are provided by H667, C669, and E691. H720 functions as the Proton donor in the catalytic mechanism. A Zn(2+)-binding site is contributed by C752.

This sequence belongs to the vitamin-B12 independent methionine synthase family. Zn(2+) serves as cofactor.

The catalysed reaction is 5-methyltetrahydropteroyltri-L-glutamate + L-homocysteine = tetrahydropteroyltri-L-glutamate + L-methionine. The protein operates within amino-acid biosynthesis; L-methionine biosynthesis via de novo pathway; L-methionine from L-homocysteine (MetE route): step 1/1. Catalyzes the transfer of a methyl group from 5-methyltetrahydrofolate to homocysteine resulting in methionine formation. The protein is 5-methyltetrahydropteroyltriglutamate--homocysteine methyltransferase of Nitratidesulfovibrio vulgaris (strain DSM 19637 / Miyazaki F) (Desulfovibrio vulgaris).